The chain runs to 209 residues: LexA repressor (209 aa).

Positions 28-48 form a DNA-binding region, H-T-H motif; it reads RVELAKILGFRSANAAEEHLK. Active-site for autocatalytic cleavage activity residues include serine 126 and lysine 163.

Belongs to the peptidase S24 family. Homodimer.

The enzyme catalyses Hydrolysis of Ala-|-Gly bond in repressor LexA.. Its function is as follows. Represses a number of genes involved in the response to DNA damage (SOS response), including recA and lexA. In the presence of single-stranded DNA, RecA interacts with LexA causing an autocatalytic cleavage which disrupts the DNA-binding part of LexA, leading to derepression of the SOS regulon and eventually DNA repair. The sequence is that of LexA repressor from Psychromonas ingrahamii (strain DSM 17664 / CCUG 51855 / 37).